A 99-amino-acid chain; its full sequence is Gibberellin-regulated protein 3 (99 aa).

The N-terminal stretch at 1 to 26 is a signal peptide; the sequence is MAIFRSTLVLLLILFCLTTFELHVHA.

Belongs to the GASA family. In terms of processing, six disulfide bonds may be present. Expressed in siliques, dry seeds and vasculature of roots and rosette leaves.

The protein localises to the secreted. In terms of biological role, gibberellin-regulated protein that may function in hormonal controlled steps of development such as seed germination, flowering and seed maturation. The chain is Gibberellin-regulated protein 3 (GASA3) from Arabidopsis thaliana (Mouse-ear cress).